A 287-amino-acid chain; its full sequence is tRNA-cytidine(32) 2-sulfurtransferase (287 aa).

A PP-loop motif motif is present at residues 58–63; sequence SGGKDS. 3 residues coordinate [4Fe-4S] cluster: Cys133, Cys136, and Cys224.

It belongs to the TtcA family. Homodimer. The cofactor is Mg(2+). Requires [4Fe-4S] cluster as cofactor.

It localises to the cytoplasm. It catalyses the reaction cytidine(32) in tRNA + S-sulfanyl-L-cysteinyl-[cysteine desulfurase] + AH2 + ATP = 2-thiocytidine(32) in tRNA + L-cysteinyl-[cysteine desulfurase] + A + AMP + diphosphate + H(+). It functions in the pathway tRNA modification. In terms of biological role, catalyzes the ATP-dependent 2-thiolation of cytidine in position 32 of tRNA, to form 2-thiocytidine (s(2)C32). The sulfur atoms are provided by the cysteine/cysteine desulfurase (IscS) system. The polypeptide is tRNA-cytidine(32) 2-sulfurtransferase (Dinoroseobacter shibae (strain DSM 16493 / NCIMB 14021 / DFL 12)).